The primary structure comprises 295 residues: Ribosomal protein L11 methyltransferase (295 aa).

4 residues coordinate S-adenosyl-L-methionine: Thr-138, Gly-161, Asp-183, and Asn-230.

It belongs to the methyltransferase superfamily. PrmA family.

The protein localises to the cytoplasm. The enzyme catalyses L-lysyl-[protein] + 3 S-adenosyl-L-methionine = N(6),N(6),N(6)-trimethyl-L-lysyl-[protein] + 3 S-adenosyl-L-homocysteine + 3 H(+). Functionally, methylates ribosomal protein L11. The chain is Ribosomal protein L11 methyltransferase from Rhodopseudomonas palustris (strain BisB5).